Reading from the N-terminus, the 93-residue chain is C-C motif chemokine 14 (93 aa).

The N-terminal stretch at 1–19 is a signal peptide; it reads MKISVAAIPFFLLITIALG. Residue serine 26 is glycosylated (O-linked (GalNAc...) serine; partial). 2 cysteine pairs are disulfide-bonded: cysteine 35/cysteine 59 and cysteine 36/cysteine 75.

The protein belongs to the intercrine beta (chemokine CC) family. Post-translationally, the N-terminal processed forms HCC-1(3-74), HCC-1(4-74) and HCC-1(9-74) are produced in small amounts by proteolytic cleavage after secretion in blood. In terms of processing, HCC-1(1-74), but not HCC-1(3-74) and HCC-1(4-74), is partially O-glycosylated; the O-linked glycan consists of one Gal-GalNAc disaccharide, further modified by two N-acetylneuraminic acids. Expressed constitutively in several normal tissues: spleen, liver, skeletal and heart muscle, gut, and bone marrow, present at high concentrations (1-80 nM) in plasma.

It is found in the secreted. In terms of biological role, has weak activities on human monocytes and acts via receptors that also recognize MIP-1 alpha. It induces intracellular Ca(2+) changes and enzyme release, but no chemotaxis, at concentrations of 100-1,000 nM, and is inactive on T-lymphocytes, neutrophils, and eosinophil leukocytes. Enhances the proliferation of CD34 myeloid progenitor cells. The processed form HCC-1(9-74) is a chemotactic factor that attracts monocytes, eosinophils, and T-cells and is a ligand for CCR1, CCR3 and CCR5. This is C-C motif chemokine 14 (CCL14) from Homo sapiens (Human).